The following is an 89-amino-acid chain: Small ribosomal subunit protein uS15 (89 aa).

The protein belongs to the universal ribosomal protein uS15 family. As to quaternary structure, part of the 30S ribosomal subunit. Forms a bridge to the 50S subunit in the 70S ribosome, contacting the 23S rRNA.

In terms of biological role, one of the primary rRNA binding proteins, it binds directly to 16S rRNA where it helps nucleate assembly of the platform of the 30S subunit by binding and bridging several RNA helices of the 16S rRNA. Functionally, forms an intersubunit bridge (bridge B4) with the 23S rRNA of the 50S subunit in the ribosome. The sequence is that of Small ribosomal subunit protein uS15 from Vibrio parahaemolyticus serotype O3:K6 (strain RIMD 2210633).